The following is a 664-amino-acid chain: MAGLSSSQIPDGEFTAVVYRLIRDSRYSEAVQLLSAELQRSSRSRAGLSLLAYCYYRLQEFELAAECYEQLSQMHPELEQYRLYQAQALYKACLYPEATRVAFLLDNPAYQTRVLRLQAAIKYSEGDLPGARSLVEQLLSGEGVEDSGGESDYDGQINLGCLLYKEGHYEAACSKFLAALQASGYQPDLSYNLALAYYSSRQYAPALKHIADIIERGIRQHPELGVGMTTEGIDVRSVGNTIVLHQTALVEAFNLKAAIEYQLRNYEAAQEALTDMPPRAEEELDPVTLHNQALMNMDAKPTEGFEKLQFLLQQNPFPPETFGNLLLLYCKYEYFDLAADVLAENAHLTYKFLTPYLYDFLDAMITCQTAPEEAFIKLDGLAGMLTEQLRKLTIQVQDSRHSRDDESAKKAVNEYDETLEKYIPVLMAQAKIYWNFENYPMVEKIFRKSVEFCNDHDVWKLNVAHVLFMQENKYKEAIGFYEPIVKKNYDNILSVSAIVLANLCVSYIMTSQNEEAEELMRKIEKEEEQLSYGDPDKKIYHLCIVNLVIGTLYCAKGNYDFGISRVIKSLEPYHKKLGTDTWYYAKRCFLSLLENMSKHTIMLRDSVIQECVQFLEHCELYGRNIPAVIEQPLEEERMHTGKNTVTYESRKLRALIYEIIGWNV.

7 TPR repeats span residues 11–44 (DGEF…SSRS), 45–78 (RAGL…HPEL), 153–186 (YDGQ…SGYQ), 188–220 (DLSY…GIRQ), 385–418 (LTEQ…YDET), 423–456 (IPVL…CNDH), and 458–491 (VWKL…NYDN). Residues 507–534 (YIMTSQNEEAEELMRKIEKEEEQLSYGD) are a coiled coil. Residues 543 to 576 (CIVNLVIGTLYCAKGNYDFGISRVIKSLEPYHKK) form a TPR 8 repeat.

It belongs to the TTC30/dfy-1/fleer family. As to quaternary structure, interacts with the IFT B complex components IFT27, IFT46, IFT74, IFT52, IFT57, IFT80, IFT81 and IFT88. Interacts with KIF17.

The protein localises to the cell projection. It is found in the cilium. In terms of biological role, required for polyglutamylation of axonemal tubulin. Plays a role in anterograde intraflagellar transport (IFT), the process by which cilia precursors are transported from the base of the cilium to the site of their incorporation at the tip. The chain is Intraflagellar transport protein 70B (Ift70b) from Mus musculus (Mouse).